Reading from the N-terminus, the 208-residue chain is TnpB-like protein MJ0012 (208 aa).

Zn(2+) contacts are provided by C83, C86, C100, and C103.

Belongs to the transposase 35 family.

This is TnpB-like protein MJ0012 from Methanocaldococcus jannaschii (strain ATCC 43067 / DSM 2661 / JAL-1 / JCM 10045 / NBRC 100440) (Methanococcus jannaschii).